The sequence spans 196 residues: Beta-crystallin A4 (196 aa).

Residue threonine 2 is modified to N-acetylthreonine. Residues 2–11 (TLQCTKSAGH) form an N-terminal arm region. 2 consecutive Beta/gamma crystallin 'Greek key' domains span residues 12–51 (WRMV…KVLS) and 52–98 (GAWV…RPVA). Residues 99–104 (CANHRD) are connecting peptide. Beta/gamma crystallin 'Greek key' domains follow at residues 105 to 146 (SRLT…HVQS) and 147 to 195 (GAWV…RRIQ).

The protein belongs to the beta/gamma-crystallin family. In terms of assembly, homo/heterodimer, or complexes of higher-order. The structure of beta-crystallin oligomers seems to be stabilized through interactions between the N-terminal arms.

Functionally, crystallins are the dominant structural components of the vertebrate eye lens. The sequence is that of Beta-crystallin A4 (Cryba4) from Mus musculus (Mouse).